We begin with the raw amino-acid sequence, 172 residues long: Interferon tau-2 (172 aa).

2 disulfide bridges follow: cysteine 1–cysteine 99 and cysteine 29–cysteine 139. N-linked (GlcNAc...) asparagine glycosylation occurs at asparagine 78.

Belongs to the alpha/beta interferon family. IFN-alphaII subfamily. As to expression, constitutively and exclusively expressed in the mononuclear cells of the extraembryonic trophectoderm.

The protein localises to the secreted. Its function is as follows. Paracrine hormone primarily responsible for maternal recognition of pregnancy. Interacts with endometrial receptors, probably type I interferon receptors, and blocks estrogen receptor expression, preventing the estrogen-induced increase in oxytocin receptor expression in the endometrium. This results in the suppression of the pulsatile endometrial release of the luteolytic hormone prostaglandin F2-alpha, hindering the regression of the corpus luteum (luteolysis) and therefore a return to ovarian cyclicity. This, and a possible direct effect of IFN-tau on prostaglandin synthesis, leads in turn to continued ovarian progesterone secretion, which stimulates the secretion by the endometrium of the nutrients required for the growth of the conceptus. In summary, displays particularly high antiviral and antiproliferative potency concurrently with particular weak cytotoxicity, high antiluteolytic activity and immunomodulatory properties. In contrast with other IFNs, IFN-tau is not virally inducible. The chain is Interferon tau-2 (IFNT2) from Bos taurus (Bovine).